The following is a 167-amino-acid chain: MKLFTDIISNDEMCSDGYEMKLVEDVVYEVDAAKIVVSDGDVDIGANPSAEEAAEALENGAEQVINIVHSFRLQSTQFDKKSYLAYLKGYMKSVKAKLAESNPDRVPAFEKGAAAFAKKIVGSFNDWEFFTGESMDPEGMVALLNYREDGVTPYLVFWKDGLRETKI.

The TCTP domain occupies 1 to 167 (MKLFTDIISN…WKDGLRETKI (167 aa)).

This sequence belongs to the TCTP family.

Its subcellular location is the cytoplasm. The protein localises to the cytoskeleton. In terms of biological role, involved in protein synthesis. Involved in microtubule stabilization. The sequence is that of Translationally-controlled tumor protein homolog from Mycosarcoma maydis (Corn smut fungus).